We begin with the raw amino-acid sequence, 242 residues long: 2-C-methyl-D-erythritol 4-phosphate cytidylyltransferase (242 aa).

The protein belongs to the IspD/TarI cytidylyltransferase family. IspD subfamily.

The enzyme catalyses 2-C-methyl-D-erythritol 4-phosphate + CTP + H(+) = 4-CDP-2-C-methyl-D-erythritol + diphosphate. It functions in the pathway isoprenoid biosynthesis; isopentenyl diphosphate biosynthesis via DXP pathway; isopentenyl diphosphate from 1-deoxy-D-xylulose 5-phosphate: step 2/6. Its function is as follows. Catalyzes the formation of 4-diphosphocytidyl-2-C-methyl-D-erythritol from CTP and 2-C-methyl-D-erythritol 4-phosphate (MEP). The sequence is that of 2-C-methyl-D-erythritol 4-phosphate cytidylyltransferase from Halorhodospira halophila (strain DSM 244 / SL1) (Ectothiorhodospira halophila (strain DSM 244 / SL1)).